Here is a 667-residue protein sequence, read N- to C-terminus: DNA ligase (667 aa).

NAD(+) is bound by residues 32 to 36 (DSEYD), 81 to 82 (SL), and Glu110. Lys112 serves as the catalytic N6-AMP-lysine intermediate. NAD(+) contacts are provided by Arg133, Glu167, Lys283, and Lys307. The Zn(2+) site is built by Cys401, Cys404, Cys419, and Cys424. Residues 586–667 (EGHPEFSGKT…FVDKQNELNS (82 aa)) form the BRCT domain.

This sequence belongs to the NAD-dependent DNA ligase family. LigA subfamily. Requires Mg(2+) as cofactor. It depends on Mn(2+) as a cofactor.

The enzyme catalyses NAD(+) + (deoxyribonucleotide)n-3'-hydroxyl + 5'-phospho-(deoxyribonucleotide)m = (deoxyribonucleotide)n+m + AMP + beta-nicotinamide D-nucleotide.. Its function is as follows. DNA ligase that catalyzes the formation of phosphodiester linkages between 5'-phosphoryl and 3'-hydroxyl groups in double-stranded DNA using NAD as a coenzyme and as the energy source for the reaction. It is essential for DNA replication and repair of damaged DNA. The polypeptide is DNA ligase (Staphylococcus aureus (strain Mu3 / ATCC 700698)).